A 370-amino-acid polypeptide reads, in one-letter code: Polygalacturonase 1 (370 aa).

The signal sequence occupies residues 1-18; sequence MRTSILSMLALGAAAVSA. Cys36 and Cys51 are oxidised to a cystine. PbH1 repeat units follow at residues 163-194, 195-216, 217-237, 246-267, and 275-297; these read ADNL…DVGE, STYI…AINS, GENI…SIGS, VKNV…RIKT, and VADV…VIEQ. The Proton donor role is filled by Asp209. The cysteines at positions 211 and 227 are disulfide-linked. The active site involves His231. Residue Asn248 is glycosylated (N-linked (GlcNAc...) asparagine). 2 disulfide bridges follow: Cys337/Cys342 and Cys361/Cys370.

It belongs to the glycosyl hydrolase 28 family.

It is found in the secreted. It catalyses the reaction (1,4-alpha-D-galacturonosyl)n+m + H2O = (1,4-alpha-D-galacturonosyl)n + (1,4-alpha-D-galacturonosyl)m.. The chain is Polygalacturonase 1 (PG1) from Penicillium olsonii.